We begin with the raw amino-acid sequence, 135 residues long: Succinate dehydrogenase assembly factor 3, mitochondrial (135 aa).

The interval 73–101 is disordered; it reads KENSNNNDNYNNNNNDNNNDNNNFINIGQ. A compositionally biased stretch (low complexity) spans 75–95; sequence NSNNNDNYNNNNNDNNNDNNN.

This sequence belongs to the complex I LYR family. SDHAF3 subfamily. In terms of assembly, interacts with the iron-sulfur protein subunit within the SDH catalytic dimer.

Its subcellular location is the mitochondrion matrix. Plays an essential role in the assembly of succinate dehydrogenase (SDH), an enzyme complex (also referred to as respiratory complex II) that is a component of both the tricarboxylic acid (TCA) cycle and the mitochondrial electron transport chain, and which couples the oxidation of succinate to fumarate with the reduction of ubiquinone (coenzyme Q) to ubiquinol. Promotes maturation of the iron-sulfur protein subunit of the SDH catalytic dimer, protecting it from the deleterious effects of oxidants. May act together with SDHAF1. In Dictyostelium discoideum (Social amoeba), this protein is Succinate dehydrogenase assembly factor 3, mitochondrial (acn9).